A 245-amino-acid chain; its full sequence is 4-hydroxy-tetrahydrodipicolinate reductase (245 aa).

NAD(+) is bound by residues 7 to 12 (GAKGKV), 75 to 77 (GTT), and 102 to 105 (APNF). The active-site Proton donor/acceptor is the His132. A (S)-2,3,4,5-tetrahydrodipicolinate-binding site is contributed by His133. The Proton donor role is filled by Lys136. Residue 142–143 (GT) participates in (S)-2,3,4,5-tetrahydrodipicolinate binding.

It belongs to the DapB family.

It localises to the cytoplasm. It carries out the reaction (S)-2,3,4,5-tetrahydrodipicolinate + NAD(+) + H2O = (2S,4S)-4-hydroxy-2,3,4,5-tetrahydrodipicolinate + NADH + H(+). The enzyme catalyses (S)-2,3,4,5-tetrahydrodipicolinate + NADP(+) + H2O = (2S,4S)-4-hydroxy-2,3,4,5-tetrahydrodipicolinate + NADPH + H(+). Its pathway is amino-acid biosynthesis; L-lysine biosynthesis via DAP pathway; (S)-tetrahydrodipicolinate from L-aspartate: step 4/4. Its function is as follows. Catalyzes the conversion of 4-hydroxy-tetrahydrodipicolinate (HTPA) to tetrahydrodipicolinate. This is 4-hydroxy-tetrahydrodipicolinate reductase from Mycobacterium bovis (strain BCG / Pasteur 1173P2).